The chain runs to 252 residues: Protein UL24 homolog (252 aa).

The segment at Lys-211 to Gln-252 is disordered. The span at Ala-212 to Glu-223 shows a compositional bias: polar residues. Residues Pro-237–Gln-252 are compositionally biased toward basic residues.

Belongs to the herpesviridae UL24 family.

It is found in the virion. The protein localises to the host cytoplasm. It localises to the host nucleus. Its subcellular location is the host nucleolus. The protein resides in the host Golgi apparatus. May participate in nuclear egress of viral particles. Plays a role in the dispersal of several host nucleolar proteins including NCL/nucleolin and NPM1. Since deletion of host NCL/nucleolin negatively impact on nuclear egress, UL24 supposedly acts on this process through its effect on host nucleoli. The polypeptide is Protein UL24 homolog (U49) (Homo sapiens (Human)).